A 180-amino-acid chain; its full sequence is uncharacterized protein (180 aa).

The interval 1-31 (MSTYEEEHGIQQNSRDYQEVGGTSQEEQRRQ) is disordered. An N-acetylserine modification is found at Ser-2. The RING-type zinc finger occupies 109–153 (CSICYTNYLEDEYPLVVELPHCHHKFDLECLSVWLSRSTTCPLCR).

This is an uncharacterized protein from Saccharomyces cerevisiae (strain ATCC 204508 / S288c) (Baker's yeast).